We begin with the raw amino-acid sequence, 490 residues long: Betaine aldehyde dehydrogenase (490 aa).

Asp-93 serves as a coordination point for K(+). 150-152 (GAW) contributes to the NAD(+) binding site. Lys-162 acts as the Charge relay system in catalysis. Residue 176–179 (KPSE) coordinates NAD(+). Residue Val-180 coordinates K(+). Residue 230-233 (GVKT) coordinates NAD(+). Leu-246 lines the K(+) pocket. The active-site Proton acceptor is Glu-252. 3 residues coordinate NAD(+): Gly-254, Cys-286, and Glu-387. The active-site Nucleophile is Cys-286. Cys-286 carries the post-translational modification Cysteine sulfenic acid (-SOH). Positions 457 and 460 each coordinate K(+). The Charge relay system role is filled by Glu-464.

This sequence belongs to the aldehyde dehydrogenase family. In terms of assembly, dimer of dimers. The cofactor is K(+).

The enzyme catalyses betaine aldehyde + NAD(+) + H2O = glycine betaine + NADH + 2 H(+). It functions in the pathway amine and polyamine biosynthesis; betaine biosynthesis via choline pathway; betaine from betaine aldehyde: step 1/1. Involved in the biosynthesis of the osmoprotectant glycine betaine. Catalyzes the irreversible oxidation of betaine aldehyde to the corresponding acid. The chain is Betaine aldehyde dehydrogenase from Serratia proteamaculans (strain 568).